The sequence spans 181 residues: Large ribosomal subunit protein uL10 (181 aa).

This sequence belongs to the universal ribosomal protein uL10 family. In terms of assembly, part of the ribosomal stalk of the 50S ribosomal subunit. The N-terminus interacts with L11 and the large rRNA to form the base of the stalk. The C-terminus forms an elongated spine to which L12 dimers bind in a sequential fashion forming a multimeric L10(L12)X complex.

Its function is as follows. Forms part of the ribosomal stalk, playing a central role in the interaction of the ribosome with GTP-bound translation factors. This chain is Large ribosomal subunit protein uL10, found in Bradyrhizobium diazoefficiens (strain JCM 10833 / BCRC 13528 / IAM 13628 / NBRC 14792 / USDA 110).